The following is a 427-amino-acid chain: CCA-adding enzyme (427 aa).

Positions 50 and 53 each coordinate ATP. CTP is bound by residues Ser-50 and Lys-53. Mg(2+)-binding residues include Asp-61, Asp-63, and Asp-112. ATP-binding residues include His-135, Lys-155, and Tyr-164. Residues His-135, Lys-155, and Tyr-164 each contribute to the CTP site.

The protein belongs to the tRNA nucleotidyltransferase/poly(A) polymerase family. Archaeal CCA-adding enzyme subfamily. As to quaternary structure, homodimer. Mg(2+) serves as cofactor.

The enzyme catalyses a tRNA precursor + 2 CTP + ATP = a tRNA with a 3' CCA end + 3 diphosphate. It carries out the reaction a tRNA with a 3' CCA end + 2 CTP + ATP = a tRNA with a 3' CCACCA end + 3 diphosphate. Functionally, catalyzes the addition and repair of the essential 3'-terminal CCA sequence in tRNAs without using a nucleic acid template. Adds these three nucleotides in the order of C, C, and A to the tRNA nucleotide-73, using CTP and ATP as substrates and producing inorganic pyrophosphate. tRNA 3'-terminal CCA addition is required both for tRNA processing and repair. Also involved in tRNA surveillance by mediating tandem CCA addition to generate a CCACCA at the 3' terminus of unstable tRNAs. While stable tRNAs receive only 3'-terminal CCA, unstable tRNAs are marked with CCACCA and rapidly degraded. This is CCA-adding enzyme from Picrophilus torridus (strain ATCC 700027 / DSM 9790 / JCM 10055 / NBRC 100828 / KAW 2/3).